The following is a 192-amino-acid chain: MGNSKLSKEEKEEIIKKTKYTPEDIEQLIKDFKVAAASDKKSGFSQEEFIKFFKVRFSNWDEASMVRMFTLFDSDGNGVIDVKEFITALYLMAKAPTLDKLGFFFDLFDSDKSGYLEREEVDKLVNIVVCCGKGLGYSINDAIDYAVSITSCRHIADYQKGMSREEFIKSASQSENFVKVICFYESPCMQLY.

2 consecutive EF-hand domains span residues 60–95 and 96–131; these read WDEA…MAKA and PTLD…VVCC. Residues Asp73, Asp75, Asn77, Glu84, Asp109, Asp111, Ser113, Tyr115, and Glu120 each contribute to the Ca(2+) site.

The protein belongs to the recoverin family.

In Dictyostelium discoideum (Social amoeba), this protein is Calcium-binding protein K (cbpK).